Consider the following 82-residue polypeptide: Small ribosomal subunit protein bS16 (82 aa).

Belongs to the bacterial ribosomal protein bS16 family.

The polypeptide is Small ribosomal subunit protein bS16 (Aeromonas hydrophila subsp. hydrophila (strain ATCC 7966 / DSM 30187 / BCRC 13018 / CCUG 14551 / JCM 1027 / KCTC 2358 / NCIMB 9240 / NCTC 8049)).